The chain runs to 346 residues: Selenocysteine Se-methyltransferase (346 aa).

The Hcy-binding domain maps to 13–330 (SMKELLKETG…TTIRAIHKRL (318 aa)). Zn(2+) is bound by residues cysteine 248, cysteine 315, and cysteine 316.

The cofactor is Zn(2+). In terms of tissue distribution, expressed in roots, young leaves and florets, but not detected in plants not exposed to selenium.

It catalyses the reaction S-methyl-L-methionine + L-selenocysteine = Se-methyl-L-selenocysteine + L-methionine + H(+). Inhibited by L-methionine. Its function is as follows. Catalyzes the methylation of DL- and L-selenocysteine with S-methylmethionine as donor. Also methylates DL-homocysteine, DL- and L-cysteine in vitro. May be involved in selenium detoxification. This is Selenocysteine Se-methyltransferase (SMT) from Brassica oleracea var. italica (Broccoli).